Reading from the N-terminus, the 699-residue chain is Polyribonucleotide nucleotidyltransferase (699 aa).

Mg(2+) contacts are provided by aspartate 485 and aspartate 491. The KH domain occupies 552 to 611 (PRITTIKINPEKIRDVIGKGGAVIRALTEETGTTIELEDDGTVRIASSNGEATKEAIRRI). The S1 motif domain occupies 621–689 (GRIYNGKVIR…RQGRVRLSIK (69 aa)).

It belongs to the polyribonucleotide nucleotidyltransferase family. Component of the RNA degradosome, which is a multiprotein complex involved in RNA processing and mRNA degradation. Mg(2+) serves as cofactor.

The protein localises to the cytoplasm. The catalysed reaction is RNA(n+1) + phosphate = RNA(n) + a ribonucleoside 5'-diphosphate. Its function is as follows. Involved in mRNA degradation. Catalyzes the phosphorolysis of single-stranded polyribonucleotides processively in the 3'- to 5'-direction. This is Polyribonucleotide nucleotidyltransferase from Shewanella sp. (strain W3-18-1).